A 269-amino-acid polypeptide reads, in one-letter code: 5'-nucleotidase SurE (269 aa).

A divalent metal cation-binding residues include aspartate 8, aspartate 9, serine 40, and asparagine 95.

The protein belongs to the SurE nucleotidase family. A divalent metal cation serves as cofactor.

It is found in the cytoplasm. It catalyses the reaction a ribonucleoside 5'-phosphate + H2O = a ribonucleoside + phosphate. Its function is as follows. Nucleotidase that shows phosphatase activity on nucleoside 5'-monophosphates. In Nitratidesulfovibrio vulgaris (strain DSM 19637 / Miyazaki F) (Desulfovibrio vulgaris), this protein is 5'-nucleotidase SurE.